Reading from the N-terminus, the 356-residue chain is Histidinol-phosphate aminotransferase (356 aa).

K214 carries the N6-(pyridoxal phosphate)lysine modification.

Belongs to the class-II pyridoxal-phosphate-dependent aminotransferase family. Histidinol-phosphate aminotransferase subfamily. Homodimer. Pyridoxal 5'-phosphate is required as a cofactor.

It carries out the reaction L-histidinol phosphate + 2-oxoglutarate = 3-(imidazol-4-yl)-2-oxopropyl phosphate + L-glutamate. It participates in amino-acid biosynthesis; L-histidine biosynthesis; L-histidine from 5-phospho-alpha-D-ribose 1-diphosphate: step 7/9. This Escherichia coli (strain SMS-3-5 / SECEC) protein is Histidinol-phosphate aminotransferase.